The following is a 499-amino-acid chain: L-arabinose isomerase (499 aa).

The Mn(2+) site is built by E306, E333, H350, and H449.

Belongs to the arabinose isomerase family. It depends on Mn(2+) as a cofactor.

It catalyses the reaction beta-L-arabinopyranose = L-ribulose. The protein operates within carbohydrate degradation; L-arabinose degradation via L-ribulose; D-xylulose 5-phosphate from L-arabinose (bacterial route): step 1/3. Functionally, catalyzes the conversion of L-arabinose to L-ribulose. This chain is L-arabinose isomerase, found in Aeromonas salmonicida (strain A449).